Reading from the N-terminus, the 886-residue chain is DNA mismatch repair protein MutS (886 aa).

641–648 serves as a coordination point for ATP; sequence GPNMAGKS.

The protein belongs to the DNA mismatch repair MutS family.

This protein is involved in the repair of mismatches in DNA. It is possible that it carries out the mismatch recognition step. This protein has a weak ATPase activity. The sequence is that of DNA mismatch repair protein MutS from Rickettsia akari (strain Hartford).